Here is a 968-residue protein sequence, read N- to C-terminus: Alanine--tRNA ligase, cytoplasmic (968 aa).

N-acetylmethionine is present on methionine 1. Phosphoserine occurs at positions 3 and 8. Residue lysine 19 is modified to N6-acetyllysine. ATP-binding positions include arginine 77, histidine 95, tryptophan 176, and 214 to 216 (IWN). L-alanine contacts are provided by asparagine 216 and aspartate 239. Glycine 243 serves as a coordination point for ATP. Serine 399 and serine 555 each carry phosphoserine. Histidine 605, histidine 609, cysteine 723, and histidine 727 together coordinate Zn(2+). The Nuclear localization signal motif lies at 750 to 763 (RRIVAVTGAEAQKA). Position 876 is an N6-acetyllysine (lysine 876). An N6,N6,N6-trimethyllysine; alternate modification is found at lysine 943. Lysine 943 is modified (N6,N6-dimethyllysine; alternate). Lysine 943 carries the post-translational modification N6-methyllysine; alternate.

This sequence belongs to the class-II aminoacyl-tRNA synthetase family. In terms of assembly, monomer. Interacts with ANKRD16; the interaction is direct. Zn(2+) serves as cofactor. ISGylated. In terms of processing, methylation at 'Lys-943' by METTL21C.

It is found in the cytoplasm. Its subcellular location is the nucleus. The catalysed reaction is tRNA(Ala) + L-alanine + ATP = L-alanyl-tRNA(Ala) + AMP + diphosphate. It catalyses the reaction (S)-lactate + ATP + H(+) = (S)-lactoyl-AMP + diphosphate. It carries out the reaction (S)-lactoyl-AMP + L-lysyl-[protein] = N(6)-[(S)-lactoyl]-L-lysyl-[protein] + AMP + 2 H(+). With respect to regulation, the protein lactyltransferase activity is inhibited by beta-alanine. Catalyzes the attachment of alanine to tRNA(Ala) in a two-step reaction: alanine is first activated by ATP to form Ala-AMP and then transferred to the acceptor end of tRNA(Ala). Also edits incorrectly charged tRNA(Ala) via its editing domain. In presence of high levels of lactate, also acts as a protein lactyltransferase that mediates lactylation of lysine residues in target proteins, such as TEAD1, TP53/p53 and YAP1. Protein lactylation takes place in a two-step reaction: lactate is first activated by ATP to form lactate-AMP and then transferred to lysine residues of target proteins. Acts as an inhibitor of TP53/p53 activity by catalyzing lactylation of TP53/p53. Acts as a positive regulator of the Hippo pathway by mediating lactylation of TEAD1 and YAP1. The sequence is that of Alanine--tRNA ligase, cytoplasmic from Homo sapiens (Human).